A 630-amino-acid chain; its full sequence is Very-long-chain aldehyde decarbonylase GL1-7 (630 aa).

Transmembrane regions (helical) follow at residues 93–113, 126–146, 185–205, and 325–345; these read LYLDDQIILNGLLFYLGYAII, GALITILLHMGPVEFLYYWFH, FLLFSISILPPIFMGCGSVLA, and VWYMWMLWPVAWLSMVLAWIY. The Fatty acid hydroxylase domain maps to 133 to 272; the sequence is LHMGPVEFLY…MPFYDYIYNT (140 aa).

It belongs to the sterol desaturase family. Homodimer. In terms of tissue distribution, expressed in panicles at low levels.

The protein localises to the endoplasmic reticulum membrane. It carries out the reaction a long-chain fatty aldehyde + 2 NADPH + O2 + H(+) = a long-chain alkane + formate + 2 NADP(+) + H2O. Its function is as follows. Aldehyde decarbonylase involved in the conversion of aldehydes to alkanes. Core component of a very-long-chain alkane synthesis complex. The chain is Very-long-chain aldehyde decarbonylase GL1-7 from Oryza sativa subsp. japonica (Rice).